A 281-amino-acid polypeptide reads, in one-letter code: Putative phosphatase/phosphodiesterase MG246 (281 aa).

4 residues coordinate Fe cation: D11, E42, N43, and N70. H71 acts as the Proton donor in catalysis. Residues H157, H182, and H184 each contribute to the Fe cation site.

The protein belongs to the YmdB-like family. Fe(3+) serves as cofactor.

In Mycoplasma genitalium (strain ATCC 33530 / DSM 19775 / NCTC 10195 / G37) (Mycoplasmoides genitalium), this protein is Putative phosphatase/phosphodiesterase MG246.